The sequence spans 391 residues: Acetate kinase (391 aa).

Position 7 (N7) interacts with Mg(2+). K14 contributes to the ATP binding site. R88 lines the substrate pocket. The active-site Proton donor/acceptor is the D145. ATP-binding positions include H203–G207, D278–R280, and G326–N330. E378 lines the Mg(2+) pocket.

It belongs to the acetokinase family. As to quaternary structure, homodimer. The cofactor is Mg(2+). It depends on Mn(2+) as a cofactor.

The protein localises to the cytoplasm. The catalysed reaction is acetate + ATP = acetyl phosphate + ADP. It functions in the pathway metabolic intermediate biosynthesis; acetyl-CoA biosynthesis; acetyl-CoA from acetate: step 1/2. In terms of biological role, catalyzes the formation of acetyl phosphate from acetate and ATP. Can also catalyze the reverse reaction. This Phytoplasma mali (strain AT) protein is Acetate kinase.